The following is a 416-amino-acid chain: Lipid III flippase (416 aa).

The Cytoplasmic segment spans residues 1–17 (MSLAKASLWTAASTLVK). A helical membrane pass occupies residues 18 to 38 (IGAGLLVGKLLAVSFGPAGLG). The Periplasmic segment spans residues 39 to 45 (LAANFRQ). Residues 46 to 66 (LITVLGVLAGAGIFNGVTKYV) traverse the membrane as a helical segment. The Cytoplasmic portion of the chain corresponds to 67-84 (AQYHDNPQQLRRVVGTSS). The helical transmembrane segment at 85-105 (AMVLGFSTLMALVFVLAAAPI) threads the bilayer. The Periplasmic portion of the chain corresponds to 106-121 (SQGLFGNTDYQGLVRL). The chain crosses the membrane as a helical span at residues 122–142 (VALVQMGIAWGNLLLALMKGF). Residues 143 to 144 (RD) are Cytoplasmic-facing. Residues 145-165 (AAGNALSLIVGSLIGVLAYYV) traverse the membrane as a helical segment. The Periplasmic segment spans residues 166–174 (SYRLGGYEG). Residues 175 to 195 (ALLGLALIPALVVIPAAIMLI) traverse the membrane as a helical segment. Topologically, residues 196 to 216 (KRGVIPLSYLKPSWDNGLAGQ) are cytoplasmic. Residues 217-237 (LSKFTLMALITSVTLPVAYIM) form a helical membrane-spanning segment. Residues 238 to 259 (MRKLLAAQYSWDEVGIWQGVSS) lie on the Periplasmic side of the membrane. The helical transmembrane segment at 260–280 (ISDAYLQFITASFSVYLLPTL) threads the bilayer. Topologically, residues 281-302 (SRLTEKRDITREVVKSLKFVLP) are cytoplasmic. A helical transmembrane segment spans residues 303 to 323 (AVAAASFTVWLLRDFAIWLLL). At 324-334 (SNKFTAMRDLF) the chain is on the periplasmic side. The helical transmembrane segment at 335 to 355 (AWQLVGDVLKVGAYVFGYLVI) threads the bilayer. Residues 356–370 (AKASLRFYILAEVSQ) lie on the Cytoplasmic side of the membrane. The next 2 helical transmembrane spans lie at 371 to 391 (FTLL…LGAA) and 392 to 412 (QAYM…FLLW). Over 413–416 (RRRA) the chain is Cytoplasmic.

The protein belongs to the polysaccharide transport (PST) (TC 2.A.66.2) family. Probably part of a complex composed of WzxE, WzyE and WzzE.

Its subcellular location is the cell inner membrane. The protein operates within bacterial outer membrane biogenesis; enterobacterial common antigen biosynthesis. In terms of biological role, mediates the transbilayer movement of Und-PP-GlcNAc-ManNAcA-Fuc4NAc (lipid III) from the inner to the outer leaflet of the cytoplasmic membrane during the assembly of enterobacterial common antigen (ECA). Required for the assembly of the phosphoglyceride-linked form of ECA (ECA(PG)) and the water-soluble cyclic form of ECA (ECA(CYC)). Could also mediate the translocation of Und-PP-GlcNAc. This chain is Lipid III flippase, found in Escherichia coli (strain K12).